The following is a 172-amino-acid chain: MEKAAKKEAVESLNGLFKTTSVAVVAHYSGLTVAQMQKLRSQMKLAGASVKVSKNRLAKIALEGTDVVAIGSLLKGPTVIATSNDPVAAPKVAVEFAKANEKFVILGGSMGTTVLNVDGVKALASLPSLDELRAKLVGLLVAPATKIAQLTTAPASKLARVVQAYASKDEAA.

It belongs to the universal ribosomal protein uL10 family. In terms of assembly, part of the ribosomal stalk of the 50S ribosomal subunit. The N-terminus interacts with L11 and the large rRNA to form the base of the stalk. The C-terminus forms an elongated spine to which L12 dimers bind in a sequential fashion forming a multimeric L10(L12)X complex.

Functionally, forms part of the ribosomal stalk, playing a central role in the interaction of the ribosome with GTP-bound translation factors. The polypeptide is Large ribosomal subunit protein uL10 (Rhodopseudomonas palustris (strain BisA53)).